The chain runs to 190 residues: Putative serine carboxypeptidase-like 54 (190 aa).

The N-terminal stretch at 1 to 25 is a signal peptide; it reads MATKTFSLPFLLIVCIFSQLSSTFG. Asparagine 58, asparagine 59, and asparagine 105 each carry an N-linked (GlcNAc...) asparagine glycan.

It belongs to the peptidase S10 family.

Its subcellular location is the secreted. The protein is Putative serine carboxypeptidase-like 54 (SCPL54) of Arabidopsis thaliana (Mouse-ear cress).